The following is a 508-amino-acid chain: Erythropoietin receptor (508 aa).

Residues 1–24 form the signal peptide; sequence MDHLGASLWPQVGSLCLLLAGAAW. Residues 25–250 lie on the Extracellular side of the membrane; it reads APPPNLPDPK…SLLTPSDLDP (226 aa). An intrachain disulfide couples Cys52 to Cys62. A glycan (N-linked (GlcNAc...) asparagine) is linked at Asn76. Cys91 and Cys107 are disulfide-bonded. In terms of domain architecture, Fibronectin type-III spans 147–247; the sequence is APVGLVARLA…EPVSLLTPSD (101 aa). The WSXWS motif signature appears at 233-237; that stretch reads WSAWS. A helical transmembrane segment spans residues 251–273; the sequence is LILTLSLILVVILVLLTVLALLS. Residues 274–508 are Cytoplasmic-facing; that stretch reads HRRALKQKIW…PLPPSYVACS (235 aa). Lys281 is covalently cross-linked (Glycyl lysine isopeptide (Lys-Gly) (interchain with G-Cter in ubiquitin)). A Box 1 motif motif is present at residues 282-290; it reads IWPGIPSPE. Phosphotyrosine; by JAK2 occurs at positions 368 and 426. Positions 452 to 457 match the ITIM motif motif; that stretch reads LKYLYL. Lys453 participates in a covalent cross-link: Glycyl lysine isopeptide (Lys-Gly) (interchain with G-Cter in ubiquitin). Residues Tyr454, Tyr456, Tyr468, Tyr485, Tyr489, and Tyr504 each carry the phosphotyrosine; by JAK2 modification. Positions 454–456 are required for high-affinity SOCS3 binding; that stretch reads YLY. Residues 467–494 form a disordered region; it reads DYSSGDSQGAQGGLSDGPYSNPYENSLI.

The protein belongs to the type I cytokine receptor family. Type 1 subfamily. In terms of assembly, forms homodimers on EPO stimulation. The tyrosine-phosphorylated form interacts with several SH2 domain-containing proteins including LYN, the adapter protein SH2B2, PTPN6, PTPN11, JAK2, PI3 kinases, STAT5A/B, SOCS3, CRKL. Interacts with INPP5D/SHIP1. SH2B2 binding inhibits the JAK-STAT signaling. Interacts with RHEX; this interaction occurs in a erythropoietin (EPO)-dependent manner. Interacts with ATXN2L. Post-translationally, on EPO stimulation, phosphorylated on C-terminal tyrosine residues by JAK2. The phosphotyrosine motifs are also recruitment sites for several SH2-containing proteins and adapter proteins which mediate cell proliferation. Phosphorylation on Tyr-454 is required for PTPN6 interaction, Tyr-426 for PTPN11. Tyr-426 is also required for SOCS3 binding, but Tyr-454/Tyr-456 motif is the preferred binding site. In terms of processing, ubiquitinated by the ECS(SOCS2) complex following ligand-binding and phosphorylation by JAK2, leading to its degradation by the proteasome. Regulation by the ECS(SOCS2) complex acts as a negative feedback loop of erythropoietin-mediated signaling pathway. Ubiquitination at Lys-281 mediates receptor internalization, whereas ubiquitination at Lys-453 promotes trafficking of activated receptors to the lysosomes for degradation. Ubiquitinated by NOSIP; appears to be either multi-monoubiquitinated or polyubiquitinated. Ubiquitination mediates proliferation and survival of EPO-dependent cells. Erythroid cells and erythroid progenitor cells. In terms of tissue distribution, isoform EPOR-F is the most abundant form in EPO-dependent erythroleukemia cells and in late-stage erythroid progenitors. As to expression, isoform EPOR-S and isoform EPOR-T are the predominant forms in bone marrow. Isoform EPOR-S and isoform EPOR-T are the predominant forms in bone marrow. Isoform EPOR-T is the most abundant from in early-stage erythroid progenitor cells.

It localises to the cell membrane. The protein resides in the secreted. Its function is as follows. Receptor for erythropoietin, which mediates erythropoietin-induced erythroblast proliferation and differentiation. Upon EPO stimulation, EPOR dimerizes triggering the JAK2/STAT5 signaling cascade. In some cell types, can also activate STAT1 and STAT3. May also activate the LYN tyrosine kinase. In terms of biological role, acts as a dominant-negative receptor of EPOR-mediated signaling. This Homo sapiens (Human) protein is Erythropoietin receptor.